The chain runs to 186 residues: ATP synthase subunit delta (186 aa).

Belongs to the ATPase delta chain family. As to quaternary structure, F-type ATPases have 2 components, F(1) - the catalytic core - and F(0) - the membrane proton channel. F(1) has five subunits: alpha(3), beta(3), gamma(1), delta(1), epsilon(1). F(0) has three main subunits: a(1), b(2) and c(10-14). The alpha and beta chains form an alternating ring which encloses part of the gamma chain. F(1) is attached to F(0) by a central stalk formed by the gamma and epsilon chains, while a peripheral stalk is formed by the delta and b chains.

The protein localises to the cell membrane. F(1)F(0) ATP synthase produces ATP from ADP in the presence of a proton or sodium gradient. F-type ATPases consist of two structural domains, F(1) containing the extramembraneous catalytic core and F(0) containing the membrane proton channel, linked together by a central stalk and a peripheral stalk. During catalysis, ATP synthesis in the catalytic domain of F(1) is coupled via a rotary mechanism of the central stalk subunits to proton translocation. Its function is as follows. This protein is part of the stalk that links CF(0) to CF(1). It either transmits conformational changes from CF(0) to CF(1) or is implicated in proton conduction. This is ATP synthase subunit delta from Wolbachia pipientis wMel.